The chain runs to 168 residues: Nucleoside deoxyribosyltransferase (168 aa).

Catalysis depends on E103, which acts as the Nucleophile.

It belongs to the nucleoside deoxyribosyltransferase family.

It carries out the reaction 2-deoxy-D-ribosyl-base(1) + base(2) = 2-deoxy-D-ribosyl-base(2) + base(1).. Its pathway is nucleotide metabolism; nucleotide salvage pathway. In terms of biological role, catalyzes the cleavage of the glycosidic bond of 2'-deoxyribonucleosides and the transfer of the deoxyribosyl moiety to an acceptor purine or pyrimidine base. In Limosilactobacillus fermentum (Lactobacillus fermentum), this protein is Nucleoside deoxyribosyltransferase (ntd).